A 629-amino-acid polypeptide reads, in one-letter code: tRNA uridine 5-carboxymethylaminomethyl modification enzyme MnmG (629 aa).

FAD contacts are provided by residues 13–18, valine 125, and serine 180; that span reads GGGHAG. 273-287 lines the NAD(+) pocket; the sequence is GPRYCPSIEDKVMRF. FAD is bound at residue glutamine 370.

Belongs to the MnmG family. Homodimer. Heterotetramer of two MnmE and two MnmG subunits. FAD is required as a cofactor.

The protein localises to the cytoplasm. NAD-binding protein involved in the addition of a carboxymethylaminomethyl (cmnm) group at the wobble position (U34) of certain tRNAs, forming tRNA-cmnm(5)s(2)U34. The chain is tRNA uridine 5-carboxymethylaminomethyl modification enzyme MnmG from Klebsiella pneumoniae subsp. pneumoniae (strain ATCC 700721 / MGH 78578).